A 300-amino-acid chain; its full sequence is tRNA-cytidine(32) 2-sulfurtransferase (300 aa).

Residues 57-62 (SGGKDS) carry the PP-loop motif motif. The [4Fe-4S] cluster site is built by Cys-132, Cys-135, and Cys-223.

Belongs to the TtcA family. As to quaternary structure, homodimer. It depends on Mg(2+) as a cofactor. Requires [4Fe-4S] cluster as cofactor.

Its subcellular location is the cytoplasm. It catalyses the reaction cytidine(32) in tRNA + S-sulfanyl-L-cysteinyl-[cysteine desulfurase] + AH2 + ATP = 2-thiocytidine(32) in tRNA + L-cysteinyl-[cysteine desulfurase] + A + AMP + diphosphate + H(+). It participates in tRNA modification. Catalyzes the ATP-dependent 2-thiolation of cytidine in position 32 of tRNA, to form 2-thiocytidine (s(2)C32). The sulfur atoms are provided by the cysteine/cysteine desulfurase (IscS) system. This Xanthomonas campestris pv. campestris (strain B100) protein is tRNA-cytidine(32) 2-sulfurtransferase.